The following is a 1381-amino-acid chain: Hepatocyte growth factor receptor (1381 aa).

The first 24 residues, 1 to 24, serve as a signal peptide directing secretion; sequence MKAPTVLAPGILVLLFTLVQKSNG. Topologically, residues 25–933 are extracellular; the sequence is ECREALAKSE…VIVQSDQSFT (909 aa). The Sema domain maps to 27-516; that stretch reads REALAKSEMN…TGKKITRIPL (490 aa). N-linked (GlcNAc...) asparagine glycans are attached at residues Asn45, Asn100, and Asn106. 4 disulfide bridges follow: Cys95-Cys101, Cys98-Cys160, Cys133-Cys141, and Cys173-Cys176. 2 N-linked (GlcNAc...) asparagine glycosylation sites follow: Asn203 and Asn359. Disulfide bonds link Cys299-Cys364 and Cys386-Cys398. N-linked (GlcNAc...) asparagine glycosylation is found at Asn400 and Asn406. 4 cysteine pairs are disulfide-bonded: Cys521–Cys539, Cys527–Cys562, Cys530–Cys546, and Cys542–Cys552. Asn554 is a glycosylation site (N-linked (GlcNAc...) asparagine). 3 IPT/TIG domains span residues 564–656, 658–740, and 743–837; these read PTVY…FSYV, PIIT…FSYR, and PIVY…LIYV. A glycan (O-linked (Man) threonine) is linked at Thr583. Residues Asn608 and Asn636 are each glycosylated (N-linked (GlcNAc...) asparagine). O-linked (Man) threonine glycans are attached at residues Thr677 and Thr762. N-linked (GlcNAc...) asparagine glycans are attached at residues Asn786 and Asn880. Residues 934–956 traverse the membrane as a helical segment; sequence GVIVGVVAISIILLLLLGLFLWL. Topologically, residues 957–1381 are cytoplasmic; the sequence is KKKKQIKDLG…QDDLDGEVDT (425 aa). Position 967 is a phosphoserine (Ser967). Thr978 is subject to Phosphothreonine. Phosphoserine occurs at positions 991, 998, and 1001. Tyr1004 carries the post-translational modification Phosphotyrosine. Residues 1079 to 1346 form the Protein kinase domain; that stretch reads VHFNEVIGRG…RISAIFSTFI (268 aa). Residues 1085–1093 and Lys1111 contribute to the ATP site; that span reads IGRGHFGCV. The Proton acceptor role is filled by Asp1205. The tract at residues 1213–1381 is interaction with RANBP9; sequence LDEKFTVKVA…QDDLDGEVDT (169 aa). At Tyr1231 the chain carries Phosphotyrosine. Phosphotyrosine; by autocatalysis occurs at positions 1235 and 1236. Thr1290 carries the post-translational modification Phosphothreonine. An interaction with MUC20 region spans residues 1321-1360; it reads WHPKAEMRPSFSELVSRISAIFSTFIGEHYVHVNATYVNV. 2 positions are modified to phosphotyrosine; by autocatalysis: Tyr1350 and Tyr1357. At Tyr1366 the chain carries Phosphotyrosine.

This sequence belongs to the protein kinase superfamily. Tyr protein kinase family. In terms of assembly, heterodimer made of an alpha chain (50 kDa) and a beta chain (145 kDa) which are disulfide linked. Binds PLXNB1. Interacts when phosphorylated with downstream effectors including STAT3, PIK3R1, SRC, PCLG1, GRB2 and GAB1. Interacts with SPSB1, SPSB2 and SPSB4. Interacts with INPP5D/SHIP1. When phosphorylated at Tyr-1357, interacts with INPPL1/SHIP2. Interacts with RANBP9 and RANBP10, as well as SPSB1, SPSB2, SPSB3 and SPSB4. SPSB1 binding occurs in the presence and in the absence of HGF, however HGF treatment has a positive effect on this interaction. Interacts with MUC20; prevents interaction with GRB2 and suppresses hepatocyte growth factor-induced cell proliferation. Interacts with GRB10. Interacts with PTPN1 and PTPN2. Interacts with HSP90AA1 and HSP90AB1; the interaction suppresses MET kinase activity. Interacts with tensin TNS3. Interacts (when phosphorylated) with tensin TNS4 (via SH2 domain); the interaction increases MET protein stability by inhibiting MET endocytosis and subsequent lysosomal degradation. Autophosphorylated in response to ligand binding on Tyr-1235 and Tyr-1236 in the kinase domain leading to further phosphorylation of Tyr-1350 and Tyr-1357 in the C-terminal multifunctional docking site. Dephosphorylated by PTPRJ at Tyr-1350 and Tyr-1366. Dephosphorylated by PTPN1 and PTPN2. In terms of processing, ubiquitinated. Ubiquitination by CBL regulates the receptor stability and activity through proteasomal degradation. Post-translationally, O-mannosylation of IPT/TIG domains by TMEM260 is required for protein maturation. O-mannosylated residues are composed of single mannose glycans that are not elongated or modified.

The protein resides in the membrane. The enzyme catalyses L-tyrosyl-[protein] + ATP = O-phospho-L-tyrosyl-[protein] + ADP + H(+). Its activity is regulated as follows. In its inactive state, the C-terminal tail interacts with the catalytic domain and inhibits the kinase activity. Upon ligand binding, the C-terminal tail is displaced and becomes phosphorylated, thus increasing the kinase activity. Its function is as follows. Receptor tyrosine kinase that transduces signals from the extracellular matrix into the cytoplasm by binding to hepatocyte growth factor/HGF ligand. Regulates many physiological processes including proliferation, scattering, morphogenesis and survival. Ligand binding at the cell surface induces autophosphorylation of MET on its intracellular domain that provides docking sites for downstream signaling molecules. Following activation by ligand, interacts with the PI3-kinase subunit PIK3R1, PLCG1, SRC, GRB2, STAT3 or the adapter GAB1. Recruitment of these downstream effectors by MET leads to the activation of several signaling cascades including the RAS-ERK, PI3 kinase-AKT, or PLCgamma-PKC. The RAS-ERK activation is associated with the morphogenetic effects while PI3K/AKT coordinates prosurvival effects. During embryonic development, MET signaling plays a role in gastrulation, development and migration of muscles and neuronal precursors, angiogenesis and kidney formation. In adults, participates in wound healing as well as organ regeneration and tissue remodeling. Also promotes differentiation and proliferation of hematopoietic cells. In Dasypus novemcinctus (Nine-banded armadillo), this protein is Hepatocyte growth factor receptor (MET).